The sequence spans 149 residues: D-aminoacyl-tRNA deacylase (149 aa).

The Gly-cisPro motif, important for rejection of L-amino acids signature appears at 137-138 (GP).

The protein belongs to the DTD family. Homodimer.

Its subcellular location is the cytoplasm. The enzyme catalyses glycyl-tRNA(Ala) + H2O = tRNA(Ala) + glycine + H(+). The catalysed reaction is a D-aminoacyl-tRNA + H2O = a tRNA + a D-alpha-amino acid + H(+). Functionally, an aminoacyl-tRNA editing enzyme that deacylates mischarged D-aminoacyl-tRNAs. Also deacylates mischarged glycyl-tRNA(Ala), protecting cells against glycine mischarging by AlaRS. Acts via tRNA-based rather than protein-based catalysis; rejects L-amino acids rather than detecting D-amino acids in the active site. By recycling D-aminoacyl-tRNA to D-amino acids and free tRNA molecules, this enzyme counteracts the toxicity associated with the formation of D-aminoacyl-tRNA entities in vivo and helps enforce protein L-homochirality. The sequence is that of D-aminoacyl-tRNA deacylase from Clostridium botulinum (strain ATCC 19397 / Type A).